We begin with the raw amino-acid sequence, 302 residues long: Uroporphyrinogen-III synthase, chloroplastic (302 aa).

Residues 1–39 (MALSSSSHLLPFSRPPATFPRARHAGGGRGRAGATGRFI) form a disordered region. The transit peptide at 1-50 (MALSSSSHLLPFSRPPATFPRARHAGGGRGRAGATGRFIACSSPPPPDVV) directs the protein to the chloroplast.

The protein belongs to the uroporphyrinogen-III synthase family.

The protein resides in the plastid. Its subcellular location is the chloroplast. The enzyme catalyses hydroxymethylbilane = uroporphyrinogen III + H2O. It functions in the pathway porphyrin-containing compound metabolism; protoporphyrin-IX biosynthesis; coproporphyrinogen-III from 5-aminolevulinate: step 3/4. Functionally, catalyzes cyclization of the linear tetrapyrrole, hydroxymethylbilane, to the macrocyclic uroporphyrinogen III, a precursor of tetrapyrroles such as chlorophyll, heme and phycobilins. The protein is Uroporphyrinogen-III synthase, chloroplastic (UROS) of Oryza sativa subsp. japonica (Rice).